A 164-amino-acid polypeptide reads, in one-letter code: Peptidyl-prolyl cis-trans isomerase A (164 aa).

At methionine 1 the chain carries N-acetylmethionine. The residue at position 2 (valine 2) is an N-acetylvaline; in Peptidyl-prolyl cis-trans isomerase A, N-terminally processed. The region spanning 7 to 163 (FFDITADGEP…KKITISDCGQ (157 aa)) is the PPIase cyclophilin-type domain. Lysine 28 is modified (N6-acetyllysine; alternate). Lysine 28 participates in a covalent cross-link: Glycyl lysine isopeptide (Lys-Gly) (interchain with G-Cter in SUMO2); alternate. A Glycyl lysine isopeptide (Lys-Gly) (interchain with G-Cter in ubiquitin); alternate cross-link involves residue lysine 28. N6-acetyllysine is present on residues lysine 44 and lysine 76. Phosphoserine is present on serine 77. Lysine 82 is modified (N6-acetyllysine; alternate). Lysine 82 is covalently cross-linked (Glycyl lysine isopeptide (Lys-Gly) (interchain with G-Cter in SUMO2); alternate). Threonine 93 is subject to Phosphothreonine. An N-linked (GlcNAc...) asparagine glycan is attached at asparagine 108. 3 positions are modified to N6-acetyllysine: lysine 125, lysine 131, and lysine 133.

This sequence belongs to the cyclophilin-type PPIase family. PPIase A subfamily. As to quaternary structure, interacts with protein phosphatase PPP3CA/calcineurin A. Interacts with isoform 2 of BSG/CD147. Interacts with FOXO1; the interaction promotes FOXO1 dephosphorylation, nuclear accumulation and transcriptional activity. Interacts with integrin ITGA2B:ITGB3; the interaction is ROS and peptidyl-prolyl cis-trans isomerase (PPIase) activity-dependent and is increased in the presence of thrombin. Interacts with MAP3K5. Interacts with TARDBP; the interaction is dependent on the RNA-binding activity of TARDBP and the PPIase activity of PPIA/CYPA and the acetylation of PPIA/CYPA at Lys-125 favors the interaction. Interacts with HNRNPA1, HNRNPA2B1, HNRNPC, RBMX, HNRNPK and HNRNPM. In terms of processing, acetylation at Lys-125 markedly inhibits catalysis of cis to trans isomerization. PPIA acetylation also antagonizes the immunosuppressive effects of cyclosporine by inhibiting the sequential steps of cyclosporine binding and calcineurin inhibition. Acetylation at Lys-125 favors the interaction with TARDBP.

Its subcellular location is the cytoplasm. It localises to the secreted. The protein resides in the nucleus. It catalyses the reaction [protein]-peptidylproline (omega=180) = [protein]-peptidylproline (omega=0). With respect to regulation, binds cyclosporin A (CsA). CsA mediates some of its effects via an inhibitory action on PPIase. Catalyzes the cis-trans isomerization of proline imidic peptide bonds in oligopeptides. Exerts a strong chemotactic effect on leukocytes partly through activation of one of its membrane receptors BSG/CD147, initiating a signaling cascade that culminates in MAPK/ERK activation. Activates endothelial cells (ECs) in a proinflammatory manner by stimulating activation of NF-kappa-B and ERK, JNK and p38 MAP-kinases and by inducing expression of adhesion molecules including SELE and VCAM1. Induces apoptosis in ECs by promoting the FOXO1-dependent expression of CCL2 and BCL2L11 which are involved in EC chemotaxis and apoptosis. In response to oxidative stress, initiates proapoptotic and antiapoptotic signaling in ECs via activation of NF-kappa-B and AKT1 and up-regulation of antiapoptotic protein BCL2. Negatively regulates MAP3K5/ASK1 kinase activity, autophosphorylation and oxidative stress-induced apoptosis mediated by MAP3K5/ASK1. Necessary for the assembly of TARDBP in heterogeneous nuclear ribonucleoprotein (hnRNP) complexes and regulates TARDBP binding to RNA UG repeats and TARDBP-dependent expression of HDAC6, ATG7 and VCP which are involved in clearance of protein aggregates. Plays an important role in platelet activation and aggregation. Regulates calcium mobilization and integrin ITGA2B:ITGB3 bidirectional signaling via increased ROS production as well as by facilitating the interaction between integrin and the cell cytoskeleton. Binds heparan sulfate glycosaminoglycans. The chain is Peptidyl-prolyl cis-trans isomerase A (Ppia) from Rattus norvegicus (Rat).